A 1403-amino-acid polypeptide reads, in one-letter code: Baculoviral IAP repeat-containing protein 1a (1403 aa).

BIR repeat units lie at residues 63–128, 162–228, and 281–346; these read RLKT…EFLQ, RLES…EFLQ, and RMDT…VFLQ. Zn(2+) contacts are provided by Cys315, Cys318, His335, and Cys342. The 295-residue stretch at 464–758 folds into the NACHT domain; sequence SVMCVEGETG…EFLAAMRLTE (295 aa). Lys476 contributes to the ATP binding site.

In terms of assembly, interacts (via NACHT domain) with APAF1 (via CARD and NACHT domains).

Functionally, anti-apoptotic protein which acts by inhibiting the activities of CASP3, CASP7 and CASP9. Can inhibit the autocleavage of pro-CASP9 and cleavage of pro-CASP3 by CASP9. Capable of inhibiting CASP9 autoproteolysis at 'Asp-315' and decreasing the rate of auto proteolysis at 'Asp-330'. Acts as a mediator of neuronal survival in pathological conditions. Prevents motor-neuron apoptosis induced by a variety of signals. In Mus musculus (Mouse), this protein is Baculoviral IAP repeat-containing protein 1a (Naip1).